Here is a 257-residue protein sequence, read N- to C-terminus: DNA repair protein RecO (257 aa).

This sequence belongs to the RecO family.

Its function is as follows. Involved in DNA repair and RecF pathway recombination. The chain is DNA repair protein RecO from Synechococcus sp. (strain CC9605).